A 342-amino-acid polypeptide reads, in one-letter code: HPr kinase/phosphorylase (342 aa).

Active-site residues include H153 and K174. 168-175 (GKSGLGKS) is a binding site for ATP. A Mg(2+)-binding site is contributed by S175. D192 serves as the catalytic Proton acceptor; for phosphorylation activity. Proton donor; for dephosphorylation activity. Positions 217-226 (MEIRGLGVVD) are important for the catalytic mechanism of both phosphorylation and dephosphorylation. E218 is a binding site for Mg(2+). R259 is a catalytic residue. An important for the catalytic mechanism of dephosphorylation region spans residues 280–285 (PIFPGK).

It belongs to the HPrK/P family. As to quaternary structure, homohexamer. It depends on Mg(2+) as a cofactor.

It carries out the reaction [HPr protein]-L-serine + ATP = [HPr protein]-O-phospho-L-serine + ADP + H(+). The catalysed reaction is [HPr protein]-O-phospho-L-serine + phosphate + H(+) = [HPr protein]-L-serine + diphosphate. Catalyzes the ATP- as well as the pyrophosphate-dependent phosphorylation of a specific serine residue in HPr, a phosphocarrier protein of the phosphoenolpyruvate-dependent sugar phosphotransferase system (PTS). HprK/P also catalyzes the pyrophosphate-producing, inorganic phosphate-dependent dephosphorylation (phosphorolysis) of seryl-phosphorylated HPr (P-Ser-HPr). This is HPr kinase/phosphorylase from Chlorobaculum tepidum (strain ATCC 49652 / DSM 12025 / NBRC 103806 / TLS) (Chlorobium tepidum).